The primary structure comprises 168 residues: 3-isopropylmalate dehydratase small subunit 2 (168 aa).

Belongs to the LeuD family. LeuD type 2 subfamily. As to quaternary structure, heterodimer of LeuC and LeuD.

The catalysed reaction is (2R,3S)-3-isopropylmalate = (2S)-2-isopropylmalate. It functions in the pathway amino-acid biosynthesis; L-leucine biosynthesis; L-leucine from 3-methyl-2-oxobutanoate: step 2/4. In terms of biological role, catalyzes the isomerization between 2-isopropylmalate and 3-isopropylmalate, via the formation of 2-isopropylmaleate. The polypeptide is 3-isopropylmalate dehydratase small subunit 2 (leuD2) (Methanopyrus kandleri (strain AV19 / DSM 6324 / JCM 9639 / NBRC 100938)).